Here is a 273-residue protein sequence, read N- to C-terminus: Putative tyrosine-protein phosphatase H16_A0669 (273 aa).

Residues 1-15 (MIKWLQRAGCLSAHA) form the signal peptide. Cys-169 functions as the Phosphocysteine intermediate in the catalytic mechanism.

Belongs to the protein-tyrosine phosphatase family.

The enzyme catalyses O-phospho-L-tyrosyl-[protein] + H2O = L-tyrosyl-[protein] + phosphate. This is Putative tyrosine-protein phosphatase H16_A0669 from Cupriavidus necator (strain ATCC 17699 / DSM 428 / KCTC 22496 / NCIMB 10442 / H16 / Stanier 337) (Ralstonia eutropha).